The sequence spans 442 residues: Meiosis-specific with OB domain-containing protein (442 aa).

The OB DNA-binding region spans 167–272 (IINVLAAVKS…EANILLNFIR (106 aa)).

This sequence belongs to the MEIOB family. In terms of assembly, component of a multiprotein complex with RPA2 and SPATA22. Interacts with SPATA22. Interacts with the complex BRME1:HSF2BP:BRCA2. In fetal gonads, specifically expressed in the ovary starting at the 14th weeks post fertilization. In the adult, restricted to testis.

The protein localises to the cytoplasm. The protein resides in the nucleus. It is found in the chromosome. Single-stranded DNA-binding protein required for homologous recombination in meiosis I. Required for double strand breaks (DSBs) repair and crossover formation and promotion of faithful and complete synapsis. Not required for the initial loading of recombinases but required to maintain a proper number of RAD51 and DMC1 foci after the zygotene stage. May act by ensuring the stabilization of recombinases, which is required for successful homology search and meiotic recombination. Displays Single-stranded DNA 3'-5' exonuclease activity in vitro. In Homo sapiens (Human), this protein is Meiosis-specific with OB domain-containing protein.